A 235-amino-acid polypeptide reads, in one-letter code: Segregation and condensation protein A (235 aa).

Belongs to the ScpA family. In terms of assembly, component of a cohesin-like complex composed of ScpA, ScpB and the Smc homodimer, in which ScpA and ScpB bind to the head domain of Smc. The presence of the three proteins is required for the association of the complex with DNA.

It localises to the cytoplasm. Its function is as follows. Participates in chromosomal partition during cell division. May act via the formation of a condensin-like complex containing Smc and ScpB that pull DNA away from mid-cell into both cell halves. The protein is Segregation and condensation protein A of Streptococcus agalactiae serotype III (strain NEM316).